Consider the following 299-residue polypeptide: MEQHFEHLSCIPYLENTEASRYQTLDIWIPTRHQHGDSTHGYWIIFIHGGAWRDPDINATNFAEKAVLDLITSGVSQIIEGIASINYRLSPRTPSQPVPSGGHVGGEQQAMHPDHLNDVISGIEYLQRKFRFGNRYILTGHSCGATLAYQTLIRQTMDKTETHAAPHAIIGVAGLYDLPLLRDMDPMPPMCHQFLLAAFGSDETLWRDVSPATYGDFERLWPTGKLAVLVYCEDDEYVSPAQLNTMYHALEIWGEKEGRLVKTLKLPGGHDEVWRTGSGLASCVEKSINYLQDLSVSEA.

The HGGXW signature appears at 48–52 (HGGAW). The disordered stretch occupies residues 90–110 (SPRTPSQPVPSGGHVGGEQQA). S142 (nucleophile) is an active-site residue.

The protein belongs to the kynurenine formamidase family.

The protein operates within secondary metabolite biosynthesis. Functionally, kynurenine formamidase-like hydrolase; part of the fragmented gene cluster that mediates the biosynthesis of fusarochromene, a tryptophan-derived metabolite closely related to a group of mycotoxins including fusarochromanone. Within the pathway, fscH converts the product of fscD into 4-hydroxykyrunenine. The first step of the pathway is the epimerization of L-tryptophan to D-tryptophan in the presence of the NRPS-like tryptophan epimerase fscC. D-tryptophan is subsequently hydroxylated by the tryptophan 6-hydroxylase fscE to yield 6-hydroxytryptophan. The pyrrole ring undergoes cleavaged by the tryptophan 2,3-dioxygenase fscD and is finally converted to 4-hydroxykyrunenine by the hydrolase fscH. The NRPS-like oxidoreductase fscA reduces the carboxyl group to primary alcohol and the DMATS-type prenyltransferase fscG performs prenylation, followed by the formation of a chromene ring catalyzed by the oxidoreductase fscI, which leads to desacetylfusarochromene. Epoxidation by fscF and rearrangement reactions of chromene double bonds convert compound desacetylfusarochromene to fusarochromanones. Although specific acetyltransferases were not found near the fsc gene cluster, several predicted enzymes containing the N-acetyltransferase superfamily domain are present in the genome of F.equiseti. These predicted enzymes may have the potential to convert desacetylfusarochromene to fusarochromene. The chain is Kynurenine formamidase-like hydrolase fscH from Fusarium equiseti (Fusarium scirpi).